The following is a 333-amino-acid chain: tRNA N6-adenosine threonylcarbamoyltransferase (333 aa).

Residues histidine 108 and histidine 112 each coordinate Fe cation. Substrate-binding positions include 129–133, aspartate 161, glutamate 178, and serine 258; that span reads LVSGG. Aspartate 286 is a Fe cation binding site.

It belongs to the KAE1 / TsaD family. It depends on Fe(2+) as a cofactor.

The protein resides in the cytoplasm. The catalysed reaction is L-threonylcarbamoyladenylate + adenosine(37) in tRNA = N(6)-L-threonylcarbamoyladenosine(37) in tRNA + AMP + H(+). Required for the formation of a threonylcarbamoyl group on adenosine at position 37 (t(6)A37) in tRNAs that read codons beginning with adenine. Is probably involved in the transfer of the threonylcarbamoyl moiety of threonylcarbamoyl-AMP (TC-AMP) to the N6 group of A37. In Pyrobaculum islandicum (strain DSM 4184 / JCM 9189 / GEO3), this protein is tRNA N6-adenosine threonylcarbamoyltransferase.